The primary structure comprises 138 residues: Putative pre-16S rRNA nuclease (138 aa).

This sequence belongs to the YqgF nuclease family.

The protein localises to the cytoplasm. Its function is as follows. Could be a nuclease involved in processing of the 5'-end of pre-16S rRNA. This Salmonella arizonae (strain ATCC BAA-731 / CDC346-86 / RSK2980) protein is Putative pre-16S rRNA nuclease.